A 197-amino-acid chain; its full sequence is Probable host range protein 2 (197 aa).

The tract at residues aspartate 172–glutamate 197 is disordered. Acidic residues predominate over residues aspartate 174–glutamate 197.

This sequence belongs to the poxviridae C7 protein family.

The polypeptide is Probable host range protein 2 (Ovis aries (Sheep)).